Reading from the N-terminus, the 400-residue chain is Unsaturated glucuronyl hydrolase (400 aa).

Residues 1–20 (MRKLVYLVLVLGLTFLNVRC) form the signal peptide. D120 (nucleophile) is an active-site residue. The active-site Proton donor is D181.

It belongs to the glycosyl hydrolase 88 family.

Its subcellular location is the cell surface. Its function is as follows. Unsaturated glucuronyl hydrolase involved in ulvan degradation. Ulvan is the main polysaccharide component of the Ulvales (green seaweed) cell wall. It is composed of disaccharide building blocks comprising 3-sulfated rhamnose (Rha3S) linked to D-glucuronic acid (GlcA), L-iduronic acid (IduA), or D-xylose (Xyl). Unsaturated glucuronyl hydrolase catalyzes the cleavage of the unsaturated 4-deoxy-L-threo-hex-4-enopyranosiduronic acid (deltaUA) at the non-reducing end of ulvan oligomers, thus forming 5-dehydro-4-deoxy-D-glucuronate. This chain is Unsaturated glucuronyl hydrolase, found in Formosa agariphila (strain DSM 15362 / KCTC 12365 / LMG 23005 / KMM 3901 / M-2Alg 35-1).